The chain runs to 455 residues: Chromosomal replication initiator protein DnaA (455 aa).

Residues 1–75 (MLERNDLWNL…AMQATNEQIR (75 aa)) are domain I, interacts with DnaA modulators. Residues 75-117 (RPVMITEEERQQLTRDKDSQVTTGNVAGQQPTTATTPTFMRET) form a domain II region. The segment covering 84–93 (RQQLTRDKDS) has biased composition (basic and acidic residues). The disordered stretch occupies residues 84–107 (RQQLTRDKDSQVTTGNVAGQQPTT). Residues 118 to 334 (KLNPKYTFDT…GALARVQAYS (217 aa)) form a domain III, AAA+ region region. The ATP site is built by Gly-162, Gly-164, Lys-165, and Thr-166. Residues 335–455 (RLNNSPITTS…VGDLTGQLKS (121 aa)) are domain IV, binds dsDNA.

The protein belongs to the DnaA family. In terms of assembly, oligomerizes as a right-handed, spiral filament on DNA at oriC.

It is found in the cytoplasm. Functionally, plays an essential role in the initiation and regulation of chromosomal replication. ATP-DnaA binds to the origin of replication (oriC) to initiate formation of the DNA replication initiation complex once per cell cycle. Binds the DnaA box (a 9 base pair repeat at the origin) and separates the double-stranded (ds)DNA. Forms a right-handed helical filament on oriC DNA; dsDNA binds to the exterior of the filament while single-stranded (ss)DNA is stabiized in the filament's interior. The ATP-DnaA-oriC complex binds and stabilizes one strand of the AT-rich DNA unwinding element (DUE), permitting loading of DNA polymerase. After initiation quickly degrades to an ADP-DnaA complex that is not apt for DNA replication. Binds acidic phospholipids. The sequence is that of Chromosomal replication initiator protein DnaA from Lactiplantibacillus plantarum (strain ATCC BAA-793 / NCIMB 8826 / WCFS1) (Lactobacillus plantarum).